Reading from the N-terminus, the 261-residue chain is 3'-5' ssDNA/RNA exonuclease TatD (261 aa).

A divalent metal cation is bound by residues Glu92, His128, and His153.

It belongs to the metallo-dependent hydrolases superfamily. TatD-type hydrolase family. TatD subfamily. Monomer. Mg(2+) is required as a cofactor.

Its subcellular location is the cytoplasm. In terms of biological role, 3'-5' exonuclease that prefers single-stranded DNA and RNA. May play a role in the H(2)O(2)-induced DNA damage repair. This chain is 3'-5' ssDNA/RNA exonuclease TatD, found in Erwinia billingiae (strain Eb661).